A 753-amino-acid chain; its full sequence is 5-methyltetrahydropteroyltriglutamate--homocysteine methyltransferase (753 aa).

5-methyltetrahydropteroyltri-L-glutamate is bound by residues 17–20 (RELK) and K117. L-homocysteine-binding positions include 431–433 (IGS) and E484. Residues 431–433 (IGS) and E484 contribute to the L-methionine site. 5-methyltetrahydropteroyltri-L-glutamate is bound by residues 515-516 (RC) and W561. D599 lines the L-homocysteine pocket. D599 contributes to the L-methionine binding site. A 5-methyltetrahydropteroyltri-L-glutamate-binding site is contributed by E605. Positions 641, 643, and 665 each coordinate Zn(2+). H694 acts as the Proton donor in catalysis. C726 provides a ligand contact to Zn(2+).

This sequence belongs to the vitamin-B12 independent methionine synthase family. Zn(2+) is required as a cofactor.

The enzyme catalyses 5-methyltetrahydropteroyltri-L-glutamate + L-homocysteine = tetrahydropteroyltri-L-glutamate + L-methionine. It functions in the pathway amino-acid biosynthesis; L-methionine biosynthesis via de novo pathway; L-methionine from L-homocysteine (MetE route): step 1/1. Its function is as follows. Catalyzes the transfer of a methyl group from 5-methyltetrahydrofolate to homocysteine resulting in methionine formation. The polypeptide is 5-methyltetrahydropteroyltriglutamate--homocysteine methyltransferase (Escherichia coli O9:H4 (strain HS)).